A 224-amino-acid polypeptide reads, in one-letter code: uncharacterized protein (224 aa).

A helical transmembrane segment spans residues 21-41 (LTVILIIPIVYLGVCGCFEIV).

Its subcellular location is the membrane. This is an uncharacterized protein from Methanocaldococcus jannaschii (strain ATCC 43067 / DSM 2661 / JAL-1 / JCM 10045 / NBRC 100440) (Methanococcus jannaschii).